The sequence spans 472 residues: Regulator of G-protein signaling 6 (472 aa).

Residues 40–115 (KTGGVPIRTV…DDGTFYRFQA (76 aa)) enclose the DEP domain. The G protein gamma domain maps to 261–330 (IRKQITFLNA…MSKEPSQQRV (70 aa)). Residues 336–441 (SFDEILKDQV…LMKSDSYARF (106 aa)) form the RGS domain.

In terms of assembly, interacts with GNB5. Interacts with RGS7BP, leading to regulate the subcellular location of the heterodimer formed with GNB5. Interacts with GNAI1.

It is found in the cytoplasm. The protein resides in the cytosol. Its subcellular location is the membrane. The protein localises to the nucleus. It localises to the cell membrane. In terms of biological role, regulates G protein-coupled receptor signaling cascades. Inhibits signal transduction by increasing the GTPase activity of G protein alpha subunits, thereby driving them into their inactive GDP-bound form. The RGS6/GNB5 dimer enhances GNAO1 GTPase activity. This chain is Regulator of G-protein signaling 6 (RGS6), found in Homo sapiens (Human).